The sequence spans 534 residues: Prolyl 4-hydroxylase subunit alpha-2 (534 aa).

The N-terminal stretch at 1-21 (MKPWLCLVFFTSAFLIWHAEA) is a signal peptide. An N-linked (GlcNAc...) asparagine glycan is attached at Asn-115. Residues 207–240 (VEILDYLSYAVFQFGDLHRAMELTRRLISLDSTH) form a TPR repeat. Asn-263 is a glycosylation site (N-linked (GlcNAc...) asparagine). Positions 413-519 (TAELLQVANY…KWVSNKWFHE (107 aa)) constitute a Fe2OG dioxygenase domain. Positions 431, 433, and 500 each coordinate Fe cation. Lys-510 provides a ligand contact to 2-oxoglutarate.

This sequence belongs to the P4HA family. In terms of assembly, heterotetramer of two alpha-2 chains and two beta chains (the beta chain is the multi-functional PDI). Fe(2+) serves as cofactor. L-ascorbate is required as a cofactor.

The protein resides in the endoplasmic reticulum lumen. It carries out the reaction L-prolyl-[collagen] + 2-oxoglutarate + O2 = trans-4-hydroxy-L-prolyl-[collagen] + succinate + CO2. Its function is as follows. Catalyzes the post-translational formation of 4-hydroxyproline in -Xaa-Pro-Gly- sequences in collagens and other proteins. The protein is Prolyl 4-hydroxylase subunit alpha-2 (P4HA2) of Gallus gallus (Chicken).